The following is a 451-amino-acid chain: uncharacterized protein (451 aa).

Positions 2 to 60 (NVVLKQRIPLKIKRMGINGEGIGFYKKTLIFVPGALKGEEVFCQISSVRRNFAEAKLLK) constitute a TRAM domain. 4 residues coordinate [4Fe-4S] cluster: Cys73, Cys79, Cys82, and Cys162. Residues Gln283, Tyr312, Asp333, and Asp381 each coordinate S-adenosyl-L-methionine. The Nucleophile role is filled by Cys408.

Belongs to the class I-like SAM-binding methyltransferase superfamily. RNA M5U methyltransferase family.

This is an uncharacterized protein from Streptococcus agalactiae serotype III (strain NEM316).